A 441-amino-acid chain; its full sequence is CBL-interacting serine/threonine-protein kinase 3 (441 aa).

One can recognise a Protein kinase domain in the interval 14–269; it reads YEVGRTIGEG…PQEVFEDEWF (256 aa). Residues 20–28 and Lys43 contribute to the ATP site; that span reads IGEGTFAKV. The active-site Proton acceptor is the Asp137. Positions 155-184 are activation loop; it reads DFGLSALSQQVRDDGLLHTSCGTPNYVAPE. One can recognise an NAF domain in the interval 307 to 331; the sequence is EQPAAINAFEIISMSRGLNLENLFD. The PPI stretch occupies residues 337-366; that stretch reads KRETRITLRGGANEIIEKIEEAAKPLGFDV.

The protein belongs to the protein kinase superfamily. CAMK Ser/Thr protein kinase family. SNF1 subfamily. Interacts with CBL3 and CBL9. Mn(2+) serves as cofactor. In terms of tissue distribution, mostly expressed in germinating seeds and young seedlings. Detected at low levels in roots, stems, leaves and flowers.

It carries out the reaction L-seryl-[protein] + ATP = O-phospho-L-seryl-[protein] + ADP + H(+). The catalysed reaction is L-threonyl-[protein] + ATP = O-phospho-L-threonyl-[protein] + ADP + H(+). Functionally, involved in the resistance to some abiotic stresses (e.g. high salt, hyperosmotic stress) in young seedlings, by regulating the expression of several stress-inducible genes (cold- and salt-induced genes but not drought-responsive genes). Required for the ABA response during germination. CIPK serine-threonine protein kinases interact with CBL proteins. Binding of a CBL protein to the regulatory NAF domain of CIPK protein lead to the activation of the kinase in a calcium-dependent manner. The CBL9/CIPK3 complex acts in the regulation of abscisic acid response in seed germination. The protein is CBL-interacting serine/threonine-protein kinase 3 (CIPK3) of Arabidopsis thaliana (Mouse-ear cress).